The following is a 240-amino-acid chain: Regulatory protein RecX (240 aa).

It belongs to the RecX family.

It localises to the cytoplasm. Its function is as follows. Modulates RecA activity. This Lacticaseibacillus paracasei (strain ATCC 334 / BCRC 17002 / CCUG 31169 / CIP 107868 / KCTC 3260 / NRRL B-441) (Lactobacillus paracasei) protein is Regulatory protein RecX.